Reading from the N-terminus, the 372-residue chain is NAD(P)H-quinone oxidoreductase subunit 1 (372 aa).

The next 8 membrane-spanning stretches (helical) occupy residues 27 to 47, 97 to 117, 128 to 148, 166 to 186, 204 to 224, 254 to 274, 308 to 328, and 351 to 371; these read AVWM…GVLI, ALFT…YLIV, LGIG…GLLM, AAQS…IAMM, ILGW…IAAL, FALF…MVAI, AVGI…AILL, and VGLV…IAFG.

This sequence belongs to the complex I subunit 1 family. NDH-1 is composed of at least 11 different subunits.

It is found in the cellular thylakoid membrane. It carries out the reaction a plastoquinone + NADH + (n+1) H(+)(in) = a plastoquinol + NAD(+) + n H(+)(out). The enzyme catalyses a plastoquinone + NADPH + (n+1) H(+)(in) = a plastoquinol + NADP(+) + n H(+)(out). NDH-1 shuttles electrons from an unknown electron donor, via FMN and iron-sulfur (Fe-S) centers, to quinones in the respiratory and/or the photosynthetic chain. The immediate electron acceptor for the enzyme in this species is believed to be plastoquinone. Couples the redox reaction to proton translocation, and thus conserves the redox energy in a proton gradient. The polypeptide is NAD(P)H-quinone oxidoreductase subunit 1 (Cyanothece sp. (strain PCC 7425 / ATCC 29141)).